Reading from the N-terminus, the 167-residue chain is Phosphopantetheine adenylyltransferase (167 aa).

S8 contacts substrate. ATP is bound by residues 8–9 (SF) and H16. Substrate-binding residues include K40, L74, and R88. ATP-binding positions include 89-91 (GLR), E99, and 123-129 (WSFVSSS).

Belongs to the bacterial CoaD family. Homohexamer. Requires Mg(2+) as cofactor.

Its subcellular location is the cytoplasm. It catalyses the reaction (R)-4'-phosphopantetheine + ATP + H(+) = 3'-dephospho-CoA + diphosphate. The protein operates within cofactor biosynthesis; coenzyme A biosynthesis; CoA from (R)-pantothenate: step 4/5. In terms of biological role, reversibly transfers an adenylyl group from ATP to 4'-phosphopantetheine, yielding dephospho-CoA (dPCoA) and pyrophosphate. This Deinococcus radiodurans (strain ATCC 13939 / DSM 20539 / JCM 16871 / CCUG 27074 / LMG 4051 / NBRC 15346 / NCIMB 9279 / VKM B-1422 / R1) protein is Phosphopantetheine adenylyltransferase.